We begin with the raw amino-acid sequence, 278 residues long: 4-deoxy-L-threo-5-hexosulose-uronate ketol-isomerase (278 aa).

Positions 196, 198, 203, and 245 each coordinate Zn(2+).

The protein belongs to the KduI family. It depends on Zn(2+) as a cofactor.

The catalysed reaction is 5-dehydro-4-deoxy-D-glucuronate = 3-deoxy-D-glycero-2,5-hexodiulosonate. The protein operates within glycan metabolism; pectin degradation; 2-dehydro-3-deoxy-D-gluconate from pectin: step 4/5. Its function is as follows. Catalyzes the isomerization of 5-dehydro-4-deoxy-D-glucuronate to 3-deoxy-D-glycero-2,5-hexodiulosonate. This chain is 4-deoxy-L-threo-5-hexosulose-uronate ketol-isomerase, found in Salmonella typhimurium (strain LT2 / SGSC1412 / ATCC 700720).